The following is a 308-amino-acid chain: Probable manganese-dependent inorganic pyrophosphatase (308 aa).

Residues histidine 9, aspartate 13, aspartate 15, aspartate 75, histidine 97, and aspartate 149 each contribute to the Mn(2+) site.

This sequence belongs to the PPase class C family. The cofactor is Mn(2+).

It localises to the cytoplasm. The catalysed reaction is diphosphate + H2O = 2 phosphate + H(+). This Enterococcus faecalis (strain ATCC 700802 / V583) protein is Probable manganese-dependent inorganic pyrophosphatase.